A 102-amino-acid chain; its full sequence is Small ribosomal subunit protein uS10 (102 aa).

This sequence belongs to the universal ribosomal protein uS10 family. As to quaternary structure, part of the 30S ribosomal subunit.

Its function is as follows. Involved in the binding of tRNA to the ribosomes. The protein is Small ribosomal subunit protein uS10 of Pelagibacter ubique (strain HTCC1062).